A 593-amino-acid chain; its full sequence is Methionine--tRNA ligase, mitochondrial (593 aa).

Residues 1-29 (MLRVSAFRLLGRRGASRVSLLEDFSFRYY) constitute a mitochondrion transit peptide. The 'HIGH' region motif lies at 52 to 62 (FYVNAAPHIGH). Residues 347–351 (KMSKS) carry the 'KMSKS' region motif. Lys-350 lines the ATP pocket.

The protein belongs to the class-I aminoacyl-tRNA synthetase family.

The protein localises to the mitochondrion matrix. The catalysed reaction is tRNA(Met) + L-methionine + ATP = L-methionyl-tRNA(Met) + AMP + diphosphate. The chain is Methionine--tRNA ligase, mitochondrial (MARS2) from Bos taurus (Bovine).